The following is a 394-amino-acid chain: A-type flagellin (394 aa).

This sequence belongs to the bacterial flagellin family. In terms of processing, phosphorylated on tyrosine residue(s). Flagellin from strain 5939 but not from strain 170018 is glycosylated.

It localises to the secreted. The protein resides in the bacterial flagellum. Functionally, flagellin is the subunit protein which polymerizes to form the filaments of bacterial flagella. This is A-type flagellin (fliC) from Pseudomonas aeruginosa.